A 275-amino-acid polypeptide reads, in one-letter code: Ribosomal RNA small subunit methyltransferase A (275 aa).

S-adenosyl-L-methionine contacts are provided by Asn19, Leu21, Gly46, Glu71, Asp94, and Asn117.

The protein belongs to the class I-like SAM-binding methyltransferase superfamily. rRNA adenine N(6)-methyltransferase family. RsmA subfamily.

It localises to the cytoplasm. The enzyme catalyses adenosine(1518)/adenosine(1519) in 16S rRNA + 4 S-adenosyl-L-methionine = N(6)-dimethyladenosine(1518)/N(6)-dimethyladenosine(1519) in 16S rRNA + 4 S-adenosyl-L-homocysteine + 4 H(+). In terms of biological role, specifically dimethylates two adjacent adenosines (A1518 and A1519) in the loop of a conserved hairpin near the 3'-end of 16S rRNA in the 30S particle. May play a critical role in biogenesis of 30S subunits. In Burkholderia mallei (strain NCTC 10247), this protein is Ribosomal RNA small subunit methyltransferase A.